A 348-amino-acid polypeptide reads, in one-letter code: Outer membrane protein A (348 aa).

The N-terminal stretch at 1–21 (MKKTAIAIAVALAGFATVAQA) is a signal peptide. Transmembrane regions (beta stranded) follow at residues 27-37 (TWYTGAKLGWS), 55-66 (QLGAGAFGGYQV), 70-78 (VGFEMGYDW), 96-107 (QGVQLTAKLGYP), 112-120 (LDIYTRLGG), 146-155 (PVFAGGVEYA), 160-167 (IATRLEYQ), and 186-194 (LLSLGVSYR). Residues 201–210 (APVVAPAPAP) are hinge-like. 3 consecutive repeat copies span residues 205 to 206 (AP), 207 to 208 (AP), and 209 to 210 (AP). The segment at 205–210 (APAPAP) is 3 X 2 AA tandem repeats of A-P. The 129-residue stretch at 212–340 (VQTKHFTLKS…RVEIEVKGIK (129 aa)) folds into the OmpA-like domain. Cys-313 and Cys-325 are joined by a disulfide.

This sequence belongs to the outer membrane OOP (TC 1.B.6) superfamily. OmpA family. In terms of assembly, monomer and homodimer. As to quaternary structure, (Microbial infection) Upon infection with phage Sf6 associates with the mature bacteriophage capsid. Was originally suggested to be within the bacteriophage capsid. This has been disproven.

It is found in the extracellular vesicle. The protein localises to the cell outer membrane. With TolR probably plays a role in maintaining the position of the peptidoglycan cell wall in the periplasm. Acts as a porin with low permeability that allows slow penetration of small solutes; an internal gate slows down solute passage. Its function is as follows. Required for conjugation with F-type plasmids; probably serves as the mating receptor on recipient cells. In terms of biological role, (Microbial infection) Serves as a secondary receptor during phage Sf6 infection; infection requires both lipopolysaccharide (LPS) and the OmpA beta-barrel. This chain is Outer membrane protein A, found in Shigella flexneri.